Here is a 234-residue protein sequence, read N- to C-terminus: UPF0502 protein Bphyt_5265 (234 aa).

It belongs to the UPF0502 family.

In Paraburkholderia phytofirmans (strain DSM 17436 / LMG 22146 / PsJN) (Burkholderia phytofirmans), this protein is UPF0502 protein Bphyt_5265.